A 67-amino-acid chain; its full sequence is Alpha-conotoxin G1.5 (67 aa).

The signal sequence occupies residues 1-21 (MGMRMMFTVFLLVALATTVVS). A propeptide spanning residues 22–47 (FTSDRASDRRNAAVKAFDLISSTVKK) is cleaved from the precursor. 2 disulfides stabilise this stretch: cysteine 49–cysteine 55 and cysteine 50–cysteine 63. A Glutamine amide modification is found at glutamine 65.

Belongs to the conotoxin A superfamily. In terms of tissue distribution, expressed by the venom duct.

It is found in the secreted. Its function is as follows. Alpha-conotoxins act on postsynaptic membranes, they bind to the nicotinic acetylcholine receptors (nAChR) and thus inhibit them. Globular isomer (C1-C3; C2-C4) selectively inhibits neuronal (non-muscle) nAChR subtypes particularly human alpha-3-beta-2/CHRNA3-CHRNB2 (IC(50)=35.7 nM) and alpha-9-alpha-10/CHRNA9-CHRNA10 nAChRs (IC(50)=569 nM), while the ribbon isomer (C1-C4; C2-C3) shows weak inhibition on alpha-3-beta-2/CHRNA3-CHRNB2, but not on all other receptors tested. The sequence is that of Alpha-conotoxin G1.5 from Conus geographus (Geography cone).